We begin with the raw amino-acid sequence, 430 residues long: Gamma-glutamyl phosphate reductase (430 aa).

This sequence belongs to the gamma-glutamyl phosphate reductase family.

It is found in the cytoplasm. The enzyme catalyses L-glutamate 5-semialdehyde + phosphate + NADP(+) = L-glutamyl 5-phosphate + NADPH + H(+). The protein operates within amino-acid biosynthesis; L-proline biosynthesis; L-glutamate 5-semialdehyde from L-glutamate: step 2/2. Its function is as follows. Catalyzes the NADPH-dependent reduction of L-glutamate 5-phosphate into L-glutamate 5-semialdehyde and phosphate. The product spontaneously undergoes cyclization to form 1-pyrroline-5-carboxylate. This Rhodopseudomonas palustris (strain HaA2) protein is Gamma-glutamyl phosphate reductase.